A 94-amino-acid polypeptide reads, in one-letter code: Pyrimidine/purine nucleoside phosphorylase (94 aa).

The protein belongs to the nucleoside phosphorylase PpnP family.

It catalyses the reaction a purine D-ribonucleoside + phosphate = a purine nucleobase + alpha-D-ribose 1-phosphate. The catalysed reaction is adenosine + phosphate = alpha-D-ribose 1-phosphate + adenine. The enzyme catalyses cytidine + phosphate = cytosine + alpha-D-ribose 1-phosphate. It carries out the reaction guanosine + phosphate = alpha-D-ribose 1-phosphate + guanine. It catalyses the reaction inosine + phosphate = alpha-D-ribose 1-phosphate + hypoxanthine. The catalysed reaction is thymidine + phosphate = 2-deoxy-alpha-D-ribose 1-phosphate + thymine. The enzyme catalyses uridine + phosphate = alpha-D-ribose 1-phosphate + uracil. It carries out the reaction xanthosine + phosphate = alpha-D-ribose 1-phosphate + xanthine. Catalyzes the phosphorolysis of diverse nucleosides, yielding D-ribose 1-phosphate and the respective free bases. Can use uridine, adenosine, guanosine, cytidine, thymidine, inosine and xanthosine as substrates. Also catalyzes the reverse reactions. This is Pyrimidine/purine nucleoside phosphorylase from Salmonella newport (strain SL254).